The following is a 141-amino-acid chain: Lutropin subunit beta (141 aa).

The signal sequence occupies residues 1 to 20; sequence MEMLQGLLLWLLLSVGGVWA. 6 cysteine pairs are disulfide-bonded: cysteine 29–cysteine 77, cysteine 43–cysteine 92, cysteine 46–cysteine 130, cysteine 54–cysteine 108, cysteine 58–cysteine 110, and cysteine 113–cysteine 120. A glycan (N-linked (GlcNAc...) asparagine) is linked at asparagine 33.

Belongs to the glycoprotein hormones subunit beta family. In terms of assembly, heterodimer of a common alpha chain and a unique beta chain which confers biological specificity to thyrotropin, lutropin, follitropin and gonadotropin.

Its subcellular location is the secreted. In terms of biological role, promotes spermatogenesis and ovulation by stimulating the testes and ovaries to synthesize steroids. The sequence is that of Lutropin subunit beta (LHB1) from Ceratotherium simum (White rhinoceros).